The sequence spans 50 residues: PsaJ-like protein asl3190 (50 aa).

A helical membrane pass occupies residues 21-41 (VLAVISISVAFSTWAIFNYIF).

It belongs to the PsaJ family.

It localises to the cellular thylakoid membrane. The sequence is that of PsaJ-like protein asl3190 from Nostoc sp. (strain PCC 7120 / SAG 25.82 / UTEX 2576).